Consider the following 341-residue polypeptide: Glycerol-3-phosphate dehydrogenase [NAD(P)+] (341 aa).

NADPH is bound by residues serine 13, tryptophan 14, and lysine 108. Positions 108, 139, and 141 each coordinate sn-glycerol 3-phosphate. An NADPH-binding site is contributed by alanine 143. Positions 194, 247, 257, 258, and 259 each coordinate sn-glycerol 3-phosphate. The active-site Proton acceptor is the lysine 194. Arginine 258 contacts NADPH. Residues valine 282 and glutamate 284 each contribute to the NADPH site.

Belongs to the NAD-dependent glycerol-3-phosphate dehydrogenase family.

The protein localises to the cytoplasm. It catalyses the reaction sn-glycerol 3-phosphate + NAD(+) = dihydroxyacetone phosphate + NADH + H(+). The catalysed reaction is sn-glycerol 3-phosphate + NADP(+) = dihydroxyacetone phosphate + NADPH + H(+). The protein operates within membrane lipid metabolism; glycerophospholipid metabolism. Catalyzes the reduction of the glycolytic intermediate dihydroxyacetone phosphate (DHAP) to sn-glycerol 3-phosphate (G3P), the key precursor for phospholipid synthesis. This is Glycerol-3-phosphate dehydrogenase [NAD(P)+] from Lactococcus lactis subsp. lactis (strain IL1403) (Streptococcus lactis).